We begin with the raw amino-acid sequence, 426 residues long: Serine--tRNA ligase (426 aa).

Thr227 to Glu229 lines the L-serine pocket. Residues Arg258–Glu260 and Val274 each bind ATP. Glu281 contacts L-serine. Residue Glu345–Ser348 participates in ATP binding. Thr380 lines the L-serine pocket.

Belongs to the class-II aminoacyl-tRNA synthetase family. Type-1 seryl-tRNA synthetase subfamily. In terms of assembly, homodimer. The tRNA molecule binds across the dimer.

It is found in the cytoplasm. The catalysed reaction is tRNA(Ser) + L-serine + ATP = L-seryl-tRNA(Ser) + AMP + diphosphate + H(+). It carries out the reaction tRNA(Sec) + L-serine + ATP = L-seryl-tRNA(Sec) + AMP + diphosphate + H(+). Its pathway is aminoacyl-tRNA biosynthesis; selenocysteinyl-tRNA(Sec) biosynthesis; L-seryl-tRNA(Sec) from L-serine and tRNA(Sec): step 1/1. Its function is as follows. Catalyzes the attachment of serine to tRNA(Ser). Is also able to aminoacylate tRNA(Sec) with serine, to form the misacylated tRNA L-seryl-tRNA(Sec), which will be further converted into selenocysteinyl-tRNA(Sec). This Clavibacter michiganensis subsp. michiganensis (strain NCPPB 382) protein is Serine--tRNA ligase.